The following is a 326-amino-acid chain: tRNA(Ile)-lysidine synthase (326 aa).

An ATP-binding site is contributed by 23–28 (SGGVDS).

It belongs to the tRNA(Ile)-lysidine synthase family.

Its subcellular location is the cytoplasm. It carries out the reaction cytidine(34) in tRNA(Ile2) + L-lysine + ATP = lysidine(34) in tRNA(Ile2) + AMP + diphosphate + H(+). Its function is as follows. Ligates lysine onto the cytidine present at position 34 of the AUA codon-specific tRNA(Ile) that contains the anticodon CAU, in an ATP-dependent manner. Cytidine is converted to lysidine, thus changing the amino acid specificity of the tRNA from methionine to isoleucine. This chain is tRNA(Ile)-lysidine synthase, found in Wolinella succinogenes (strain ATCC 29543 / DSM 1740 / CCUG 13145 / JCM 31913 / LMG 7466 / NCTC 11488 / FDC 602W) (Vibrio succinogenes).